The sequence spans 465 residues: Cytochrome c peroxidase Ccp (465 aa).

At 1–6 the chain is on the cytoplasmic side; the sequence is MKMVSR. The chain crosses the membrane as a helical span at residues 7 to 27; it reads ITAIGLAGVAICYLGLSGYVW. Topologically, residues 28–465 are periplasmic; the sequence is YHDNKRSKQA…VYTPYMQDKQ (438 aa). 3 consecutive Cytochrome c domains span residues 42 to 155, 185 to 287, and 337 to 454; these read SAVS…AKQR, QKVA…EKDP, and AQQK…HSLN. Heme c-binding residues include Cys-59, Cys-62, His-63, Met-125, Cys-207, Cys-210, His-211, Cys-351, Cys-354, His-355, and Met-429.

The recombinant enzyme lacking its transmembrane domain is a monomer in solution. The cofactor is heme c.

The protein localises to the cell inner membrane. With respect to regulation, does not require reductive activation for maximum activity, as peroxidatic heme is high-spin His/OH(-) 6-coordinated. Calcium ions are needed to attain maximum peroxidase activity. Cytochrome peroxidase that enables anaerobic respiration with H(2)O(2) as a terminal electron acceptor. It receives electrons from the quinol pool. Menaquinol is probably the electron donor in vivo. It can use menadiol (a menaquinol analog), hydroquinone, duroquinol and the artificial electron donor ABTS(2-) in vitro, but only menadiol and hydroquinone can efficiently transfer electrons to Ccp, maintaining the catalytic activity of the enzyme. It enables E.coli to grow on a nonfermentable carbon source when H(2)O(2) is supplied. Plays a role in the peroxide stress response under anaerobic conditions. However, it does not degrade H(2)O(2) quickly enough to lower the periplasmic H(2)O(2) level below that of the surrounding medium and protect the cell from its toxic effects. The polypeptide is Cytochrome c peroxidase Ccp (Escherichia coli (strain K12)).